We begin with the raw amino-acid sequence, 178 residues long: Endothelin-2 (178 aa).

The first 24 residues, 1–24 (MVAVPTAWCSVALALLLALQEGKG), serve as a signal peptide directing secretion. Positions 25-46 (QVAAAPDHPAPSPRARGSHLRP) are excised as a propeptide. 2 disulfides stabilise this stretch: Cys-49-Cys-63 and Cys-51-Cys-59. The propeptide occupies 70-178 (VNTPGQTAPY…RPMYPRRRKT (109 aa)). The endothelin-like stretch occupies residues 96–111 (CECSSSGDPACATFCH). The interval 158–178 (ARQHQEAEREPRPMYPRRRKT) is disordered. Over residues 160–169 (QHQEAEREPR) the composition is skewed to basic and acidic residues.

The protein belongs to the endothelin/sarafotoxin family.

Its subcellular location is the secreted. Endothelins are endothelium-derived vasoconstrictor peptides. This is Endothelin-2 (EDN2) from Mustela putorius furo (European domestic ferret).